A 1202-amino-acid polypeptide reads, in one-letter code: Metabotropic glycine receptor (1202 aa).

An N-terminal signal peptide occupies residues 1–24 (MGAMAYSLLLCLLLAHLGLGEVGA). The segment at 25–62 (SLDPSERPDSSRERTSRGKQHGQQLPRASAPDPSIPWS) is disordered. The Extracellular portion of the chain corresponds to 25–417 (SLDPSERPDS…CFVQEDKYLR (393 aa)). A compositionally biased stretch (basic and acidic residues) spans 28 to 40 (PSERPDSSRERTS). Positions 85–281 (YLYTGDFHQL…CENGSYKPGW (197 aa)) are cache-like region. N-linked (GlcNAc...) asparagine glycosylation is found at asparagine 98 and asparagine 143. Residues cysteine 99 and cysteine 272 are joined by a disulfide bond. Glycine contacts are provided by serine 172 and arginine 173. Asparagine 215 carries an N-linked (GlcNAc...) asparagine glycan. Residues 234–253 (LHRRGSNQGPRGLGHSWRRR) form a disordered region. Glycine is bound at residue glutamate 271. An N-linked (GlcNAc...) asparagine glycan is attached at asparagine 274. Aspartate 307 contacts glycine. A glycan (N-linked (GlcNAc...) asparagine) is linked at asparagine 333. The helical transmembrane segment at 418 to 439 (LAIISFQALCMLLDFVSMLVVY) threads the bilayer. The Cytoplasmic segment spans residues 440 to 451 (HFRKAKSIRASG). Residues 452–474 (LILLETILFGSLLLYFPVVILYF) form a helical membrane-spanning segment. Residues 475–478 (EPST) are Extracellular-facing. A helical transmembrane segment spans residues 479–501 (FRCILLRWVRLLGFATVYGTVTL). Cysteine 481 and cysteine 573 are disulfide-bonded. The Cytoplasmic portion of the chain corresponds to 502–525 (KLHRVLKVFLSRTAQRIPYMTGGR). The chain crosses the membrane as a helical span at residues 526-547 (VMRMLAVIVLVVFWFLVGWTSS). Over 548-576 (MCQNLERDILLVGQGQTSDNLTFNMCLID) the chain is Extracellular. A helical transmembrane segment spans residues 577–597 (RWDYMTAVAEFLFLLWGIYLC). Residues 598–611 (YAVRTVPSAFHEPR) are Cytoplasmic-facing. A helical membrane pass occupies residues 612–633 (YMAVAVHNELIITAIFHTIRFV). Topologically, residues 634–642 (LASRLQPDW) are extracellular. A helical transmembrane segment spans residues 643-664 (MLMLYFAHTHLTVTVTIGLLLI). At 665–1202 (PKFSHSSNNP…SASKIPGPRK (538 aa)) the chain is on the cytoplasmic side. A phosphoserine mark is found at serine 694, serine 705, and serine 708. 2 disordered regions span residues 757 to 899 (RITE…TSML) and 914 to 995 (LGLA…QIKD). Basic and acidic residues-rich tracts occupy residues 769–781 (CSKE…DHSA) and 819–828 (STYDHVRDQT). Lysine 774 is covalently cross-linked (Glycyl lysine isopeptide (Lys-Gly) (interchain with G-Cter in ubiquitin)). Low complexity predominate over residues 845–856 (ENSTLESLSSKK). Serine 865 is subject to Phosphoserine. Positions 925–943 (MEDRAKSQKPQPKDRETNR) are enriched in basic and acidic residues. Composition is skewed to polar residues over residues 944-958 (KYSN…PNSN) and 975-994 (QRVN…TQIK). Serine 946 is modified (phosphoserine). The short motif at 1002 to 1006 (VCPWE) is the VCPWE motif 1 element. Serine 1061 is subject to Phosphoserine. A VCPWE motif 2 motif is present at residues 1067 to 1071 (VCPWE). Position 1076 is a phosphoserine (serine 1076). Polar residues-rich tracts occupy residues 1132–1144 (QMGD…SSSV) and 1151–1162 (CISSNNSPQPLT). Residues 1132–1162 (QMGDQEKQTSSSVDIIPGSCISSNNSPQPLT) form a disordered region. Positions 1167 to 1171 (VCPWE) match the VCPWE motif 3 motif.

This sequence belongs to the G-protein coupled receptor 3 family. Homodimer. Associates with the RGS7-GNB5 complex, promoting its localization to the cell membrane and regulating its GTPase activator activity. Interacts (via VCPWE motifs) with GNAO1. Interacts with GPC4. Interacts with EGFLAM.

The protein resides in the cell membrane. It is found in the postsynaptic cell membrane. It localises to the presynaptic cell membrane. The protein localises to the nucleus. Its function is as follows. Metabotropic receptor for glycine that controls synapse formation and function in the brain. Acts as an atypical G-protein coupled receptor that recruits and regulates the RGS7-GNB5 complex instead of activating G proteins. In absence of glycine ligand, promotes the GTPase activator activity of RGS7, increasing the GTPase activity of G protein alpha subunits, thereby driving them into their inactive GDP-bound form. Glycine-binding changes the conformation of the intracellular surface, inhibiting the GTPase activator activity of the RGS7-GNB5 complex, promoting G protein alpha subunits into their active GTP-bound form and regulating cAMP levels. Also able to bind taurine, a compound closely related to glycine, but with a two-fold lower affinity. Glycine receptor-dependent regulation of cAMP controls key ion channels, kinases and neurotrophic factors involved in neuronal excitability and synaptic transmission. Plays a pivotal role in regulating mood and cognition via its ability to regulate neuronal excitability in L2/L3 pyramidal neurons of the prefrontal cortex. Also involved in spatial learning by regulating hippocampal CA1 neuronal excitability. Acts as a synaptic organizer in the hippocampus, required for proper mossy fiber-CA3 neurocircuitry establishment, structure and function: induces presynaptic differentiation in contacting axons via its interaction with GPC4. In addition to glycine, may also act as a receptor for osteocalcin (BGLAP) hormone: osteocalcin-binding initiates a signaling response that prevents neuronal apoptosis in the hippocampus and regulates the synthesis of neurotransmitters. The protein is Metabotropic glycine receptor of Rattus norvegicus (Rat).